The chain runs to 189 residues: Xanthine phosphoribosyltransferase (189 aa).

Leu20 and Asn27 together coordinate xanthine. 128–132 (ANGEA) is a 5-phospho-alpha-D-ribose 1-diphosphate binding site. Position 156 (Lys156) interacts with xanthine.

It belongs to the purine/pyrimidine phosphoribosyltransferase family. Xpt subfamily. As to quaternary structure, homodimer.

The protein resides in the cytoplasm. The catalysed reaction is XMP + diphosphate = xanthine + 5-phospho-alpha-D-ribose 1-diphosphate. It participates in purine metabolism; XMP biosynthesis via salvage pathway; XMP from xanthine: step 1/1. Converts the preformed base xanthine, a product of nucleic acid breakdown, to xanthosine 5'-monophosphate (XMP), so it can be reused for RNA or DNA synthesis. The polypeptide is Xanthine phosphoribosyltransferase (Clostridium acetobutylicum (strain ATCC 824 / DSM 792 / JCM 1419 / IAM 19013 / LMG 5710 / NBRC 13948 / NRRL B-527 / VKM B-1787 / 2291 / W)).